Reading from the N-terminus, the 424-residue chain is Bone morphogenetic protein 10 (424 aa).

The signal sequence occupies residues 1-21 (MGSLVLTLCALFCLAAYLVSG). A propeptide spanning residues 22–316 (SPIMNLEQSP…IYDSTARIRR (295 aa)) is cleaved from the precursor. Residues Asn-67 and Asn-131 are each glycosylated (N-linked (GlcNAc...) asparagine). 3 cysteine pairs are disulfide-bonded: Cys-323–Cys-389, Cys-352–Cys-421, and Cys-356–Cys-423.

This sequence belongs to the TGF-beta family. As to quaternary structure, homodimer; disulfide-linked. Interacts with FBN1 (via N-terminal domain) and FBN2. Interacts with ENG. In terms of tissue distribution, detected in mammary epithelia (at protein level).

It is found in the secreted. In terms of biological role, required for maintaining the proliferative activity of embryonic cardiomyocytes by preventing premature activation of the negative cell cycle regulator CDKN1C/p57KIP and maintaining the required expression levels of cardiogenic factors such as MEF2C and NKX2-5. Acts as a ligand for ACVRL1/ALK1, BMPR1A/ALK3 and BMPR1B/ALK6, leading to activation of SMAD1, SMAD5 and SMAD8 transcription factors. Inhibits endothelial cell migration and growth. May reduce cell migration and cell matrix adhesion in breast cancer cell lines. The protein is Bone morphogenetic protein 10 (BMP10) of Homo sapiens (Human).